Here is a 232-residue protein sequence, read N- to C-terminus: Platelet-activating factor acetylhydrolase IB subunit alpha1 (232 aa).

S2 bears the N-acetylserine mark. S2 is subject to Phosphoserine. Catalysis depends on residues S47, D192, and H195.

This sequence belongs to the 'GDSL' lipolytic enzyme family. Platelet-activating factor acetylhydrolase IB beta/gamma subunits subfamily. As to quaternary structure, forms a catalytic dimer which is either homodimer (alpha1/alpha1 homodimer) or heterodimer with PAFAH1B2 (alpha1/alpha2 heterodimer). Component of the cytosolic (PAF-AH (I)) heterotetrameric enzyme, which is composed of PAFAH1B1 (beta), PAFAH1B2 (alpha2) and PAFAH1B3 (alpha1) subunits. The catalytic activity of the enzyme resides in the alpha1 (PAFAH1B3) and alpha2 (PAFAH1B2) subunits, whereas the beta subunit (PAFAH1B1) has regulatory activity. Trimer formation is not essential for the catalytic activity. Interacts with VLDLR; this interaction may modulate the Reelin pathway.

Its subcellular location is the cytoplasm. The enzyme catalyses a 1-O-alkyl-2-acetyl-sn-glycero-3-phosphocholine + H2O = a 1-O-alkyl-sn-glycero-3-phosphocholine + acetate + H(+). The catalysed reaction is 1-O-hexadecyl-2-acetyl-sn-glycero-3-phosphocholine + H2O = 1-O-hexadecyl-sn-glycero-3-phosphocholine + acetate + H(+). It catalyses the reaction 1-O-hexadecyl-2-acetyl-sn-glycero-3-phosphate + H2O = 1-O-hexadecyl-sn-glycero-3-phosphate + acetate + H(+). With respect to regulation, beta subunit (PAFAH1B1) inhibits the acetylhydrolase activity of the alpha1/alpha1 catalytic homodimer. Its function is as follows. Alpha1 catalytic subunit of the cytosolic type I platelet-activating factor (PAF) acetylhydrolase (PAF-AH (I)) heterotetrameric enzyme that catalyzes the hydrolyze of the acetyl group at the sn-2 position of PAF and its analogs and modulates the action of PAF. The activity and substrate specificity of PAF-AH (I) are affected by its subunit composition. Both alpha1/alpha1 homodimer (PAFAH1B3/PAFAH1B3 homodimer) and alpha1/alpha2 heterodimer(PAFAH1B3/PAFAH1B2 heterodimer) hydrolyze 1-O-alkyl-2-acetyl-sn-glycero-3-phosphoric acid (AAGPA) more efficiently than PAF, but they have little hydrolytic activity towards 1-O-alkyl-2-acetyl-sn-glycero-3-phosphorylethanolamine (AAGPE). Plays an important role during the development of brain. This Bos taurus (Bovine) protein is Platelet-activating factor acetylhydrolase IB subunit alpha1.